The sequence spans 437 residues: GTPase Obg (437 aa).

The 159-residue stretch at 2–160 (SMFLDTAKIS…RQLELELKIL (159 aa)) folds into the Obg domain. The region spanning 161–338 (ADVGLVGFPS…LLEATAELLA (178 aa)) is the OBG-type G domain. Residues 167–174 (GFPSVGKS), 192–196 (FTTIV), 214–217 (DLPG), 284–287 (NKMD), and 319–321 (SSL) each bind GTP. Residues Ser174 and Thr194 each contribute to the Mg(2+) site. An OCT domain is found at 359–437 (GFAEAEKEFE…IGKFEFEFVD (79 aa)).

Belongs to the TRAFAC class OBG-HflX-like GTPase superfamily. OBG GTPase family. Monomer. Mg(2+) is required as a cofactor.

Its subcellular location is the cytoplasm. An essential GTPase which binds GTP, GDP and possibly (p)ppGpp with moderate affinity, with high nucleotide exchange rates and a fairly low GTP hydrolysis rate. Plays a role in control of the cell cycle, stress response, ribosome biogenesis and in those bacteria that undergo differentiation, in morphogenesis control. The protein is GTPase Obg of Streptococcus pyogenes serotype M3 (strain ATCC BAA-595 / MGAS315).